Reading from the N-terminus, the 297-residue chain is Homoserine kinase (297 aa).

Position 85–95 (85–95 (PPTRGMGSSSA)) interacts with ATP.

It belongs to the GHMP kinase family. Homoserine kinase subfamily.

It localises to the cytoplasm. It catalyses the reaction L-homoserine + ATP = O-phospho-L-homoserine + ADP + H(+). The protein operates within amino-acid biosynthesis; L-threonine biosynthesis; L-threonine from L-aspartate: step 4/5. Its function is as follows. Catalyzes the ATP-dependent phosphorylation of L-homoserine to L-homoserine phosphate. This is Homoserine kinase from Desulfitobacterium hafniense (strain DSM 10664 / DCB-2).